Here is a 340-residue protein sequence, read N- to C-terminus: Glycerol-3-phosphate dehydrogenase [NAD(P)+] (340 aa).

Positions 11, 12, 32, 33, and 106 each coordinate NADPH. Sn-glycerol 3-phosphate-binding residues include K106, G138, and S140. A142 serves as a coordination point for NADPH. K193, D246, S256, R257, and N258 together coordinate sn-glycerol 3-phosphate. K193 acts as the Proton acceptor in catalysis. Residue R257 participates in NADPH binding. Residues V281 and E283 each contribute to the NADPH site.

It belongs to the NAD-dependent glycerol-3-phosphate dehydrogenase family.

The protein resides in the cytoplasm. The enzyme catalyses sn-glycerol 3-phosphate + NAD(+) = dihydroxyacetone phosphate + NADH + H(+). The catalysed reaction is sn-glycerol 3-phosphate + NADP(+) = dihydroxyacetone phosphate + NADPH + H(+). It participates in membrane lipid metabolism; glycerophospholipid metabolism. Functionally, catalyzes the reduction of the glycolytic intermediate dihydroxyacetone phosphate (DHAP) to sn-glycerol 3-phosphate (G3P), the key precursor for phospholipid synthesis. This Shouchella clausii (strain KSM-K16) (Alkalihalobacillus clausii) protein is Glycerol-3-phosphate dehydrogenase [NAD(P)+].